The sequence spans 199 residues: Guanylate kinase (199 aa).

Residues 20–198 form the Guanylate kinase-like domain; that stretch reads GKLIILTGPS…ALQAIEVALF (179 aa). Position 27-34 (27-34) interacts with ATP; that stretch reads GPSGVGKG.

The protein belongs to the guanylate kinase family.

It localises to the cytoplasm. It catalyses the reaction GMP + ATP = GDP + ADP. Essential for recycling GMP and indirectly, cGMP. This Nostoc sp. (strain PCC 7120 / SAG 25.82 / UTEX 2576) protein is Guanylate kinase.